The chain runs to 320 residues: o-succinylbenzoate synthase (320 aa).

Residue Lys-133 is the Proton donor of the active site. Mg(2+) contacts are provided by Asp-161, Glu-190, and Asp-213. The active-site Proton acceptor is the Lys-235.

The protein belongs to the mandelate racemase/muconate lactonizing enzyme family. MenC type 1 subfamily. A divalent metal cation serves as cofactor.

The catalysed reaction is (1R,6R)-6-hydroxy-2-succinyl-cyclohexa-2,4-diene-1-carboxylate = 2-succinylbenzoate + H2O. The protein operates within quinol/quinone metabolism; 1,4-dihydroxy-2-naphthoate biosynthesis; 1,4-dihydroxy-2-naphthoate from chorismate: step 4/7. It functions in the pathway quinol/quinone metabolism; menaquinone biosynthesis. Converts 2-succinyl-6-hydroxy-2,4-cyclohexadiene-1-carboxylate (SHCHC) to 2-succinylbenzoate (OSB). This chain is o-succinylbenzoate synthase, found in Escherichia coli O6:H1 (strain CFT073 / ATCC 700928 / UPEC).